Reading from the N-terminus, the 153-residue chain is Calmodulin-like protein 4 (153 aa).

4 EF-hand domains span residues 8-43 (DAIQ…LGTC), 44-79 (PTPG…QQKQ), 81-116 (DPEN…MGEK), and 117-152 (LTPE…PVPD).

This sequence belongs to the calmodulin family. In terms of assembly, associates with the IMAC/intermicrovillar adhesion complex.

It localises to the cell projection. The protein resides in the microvillus. As part of the intermicrovillar adhesion complex/IMAC plays a role in epithelial brush border differentiation, controlling microvilli organization and length. Acts as a light chain for MYO7B and is required for efficient targeting of the IMAC to the tips of border brush microvilli. This Xenopus tropicalis (Western clawed frog) protein is Calmodulin-like protein 4 (calml4).